The sequence spans 80 residues: UPF0125 protein PD_1376 (80 aa).

It belongs to the UPF0125 (RnfH) family.

The chain is UPF0125 protein PD_1376 from Xylella fastidiosa (strain Temecula1 / ATCC 700964).